Consider the following 118-residue polypeptide: BLOC-1-related complex subunit 8 (118 aa).

Polar residues predominate over residues 98-107 (KEQISNSQGR). The disordered stretch occupies residues 98 to 118 (KEQISNSQGRSPHVSAPSASS).

This sequence belongs to the BORCS8 family.

It is found in the lysosome membrane. Its function is as follows. As part of a BORC-like complex, it may play a role in the movement and localization of lysosomes at the cell periphery. Associated with the cytosolic face of lysosomes, this complex may couple lysosomes to microtubule plus-end-directed kinesin motors, driving lysosome movement toward the cell periphery. In Tetraodon nigroviridis (Spotted green pufferfish), this protein is BLOC-1-related complex subunit 8.